The sequence spans 284 residues: Ribosomal RNA small subunit methyltransferase A (284 aa).

Residues Asn27, Leu29, Gly54, Glu75, Asp100, and Asn125 each coordinate S-adenosyl-L-methionine.

Belongs to the class I-like SAM-binding methyltransferase superfamily. rRNA adenine N(6)-methyltransferase family. RsmA subfamily.

Its subcellular location is the cytoplasm. It carries out the reaction adenosine(1518)/adenosine(1519) in 16S rRNA + 4 S-adenosyl-L-methionine = N(6)-dimethyladenosine(1518)/N(6)-dimethyladenosine(1519) in 16S rRNA + 4 S-adenosyl-L-homocysteine + 4 H(+). In terms of biological role, specifically dimethylates two adjacent adenosines (A1518 and A1519) in the loop of a conserved hairpin near the 3'-end of 16S rRNA in the 30S particle. May play a critical role in biogenesis of 30S subunits. This Protochlamydia amoebophila (strain UWE25) protein is Ribosomal RNA small subunit methyltransferase A.